Consider the following 248-residue polypeptide: MTTETPLPVLELLPAVDVVNGQAVRLVQGEAGSETSYGTPLEAALNWQEQGAEWVHLVDLDAAFGRGSNAELLREVVGRLDIKVELSGGLRDDESLEKALDLGVARVNLGTAALENPEWTARAIDRFGDKIAVGLDVRGTTLAGRGWTKEGGDLWDVLARLEEAGCARYVVTDVTKDGTLQGPNVELLRKMVERTGKPVVASGGISSLEDLKVLRSLVPLGVEGAIVGKALYAGAFTLPEALDVAGRR.

Asp17 functions as the Proton acceptor in the catalytic mechanism. Asp136 functions as the Proton donor in the catalytic mechanism.

The protein belongs to the HisA/HisF family.

Its subcellular location is the cytoplasm. It catalyses the reaction 1-(5-phospho-beta-D-ribosyl)-5-[(5-phospho-beta-D-ribosylamino)methylideneamino]imidazole-4-carboxamide = 5-[(5-phospho-1-deoxy-D-ribulos-1-ylimino)methylamino]-1-(5-phospho-beta-D-ribosyl)imidazole-4-carboxamide. Its pathway is amino-acid biosynthesis; L-histidine biosynthesis; L-histidine from 5-phospho-alpha-D-ribose 1-diphosphate: step 4/9. This chain is 1-(5-phosphoribosyl)-5-[(5-phosphoribosylamino)methylideneamino] imidazole-4-carboxamide isomerase, found in Arthrobacter sp. (strain FB24).